The primary structure comprises 221 residues: Ras-related protein Rab-27A (221 aa).

S2 carries the N-acetylserine modification. A Phosphoserine modification is found at S2. Residue 16 to 24 (GDSGVGKTS) coordinates GTP. Positions 38–46 (FITTVGIDF) match the Effector region motif. Residues 74-78 (DTAGQ), 133-136 (NKSD), and 163-165 (SAA) contribute to the GTP site. An intrachain disulfide couples C123 to C188. S-geranylgeranyl cysteine attachment occurs at residues C219 and C221. At C221 the chain carries Cysteine methyl ester.

Belongs to the small GTPase superfamily. Rab family. In terms of assembly, binds SYTL1, SLAC2B, MYRIP, SYTL3, SYTL4 and SYTL5. Interacts with RPH3A and RPH3A. Binds MLPH and SYTL2. Interacts with UNC13D. Does not interact with the BLOC-3 complex (heterodimer of HPS1 and HPS4). Interacts (GDP-bound form preferentially) with DENND10. Found in all the examined tissues except in brain. Low expression was found in thymus, kidney, muscle and placenta. Detected in melanocytes, and in most tumor cell lines examined. Expressed in cytotoxic T-lymphocytes (CTL) and mast cells.

Its subcellular location is the membrane. It localises to the melanosome. It is found in the late endosome. The protein resides in the lysosome. It carries out the reaction GTP + H2O = GDP + phosphate + H(+). With respect to regulation, regulated by guanine nucleotide exchange factors (GEFs) which promote the exchange of bound GDP for free GTP, GTPase activating proteins (GAPs) which increase the GTP hydrolysis activity, and GDP dissociation inhibitors which inhibit the dissociation of the nucleotide from the GTPase. Activated by GEFs such as DENND10. Functionally, small GTPase which cycles between active GTP-bound and inactive GDP-bound states. In its active state, binds to a variety of effector proteins to regulate homeostasis of late endocytic pathway, including endosomal positioning, maturation and secretion. Plays a role in cytotoxic granule exocytosis in lymphocytes. Required for both granule maturation and granule docking and priming at the immunologic synapse. The sequence is that of Ras-related protein Rab-27A (RAB27A) from Homo sapiens (Human).